We begin with the raw amino-acid sequence, 77 residues long: Small nuclear ribonucleoprotein G (77 aa).

The Sm domain maps to 4–76 (AGAPDLKKYL…VIMIETLDKM (73 aa)).

The protein belongs to the snRNP Sm proteins family. In terms of assembly, belongs to the 40S cdc5-associated complex (or cwf complex), a spliceosome sub-complex reminiscent of a late-stage spliceosome composed of the U2, U5 and U6 snRNAs and at least brr2, cdc5, cwf2/prp3, cwf3/syf1, cwf4/syf3, cwf5/ecm2, spp42/cwf6, cwf7/spf27, cwf8, cwf9, cwf10, cwf11, cwf12, prp45/cwf13, cwf14, cwf15, cwf16, cwf17, cwf18, cwf19, cwf20, cwf21, cwf22, cwf23, cwf24, cwf25, cwf26, cyp7/cwf27, cwf28, cwf29/ist3, lea1, msl1, prp5/cwf1, prp10, prp12/sap130, prp17, prp22, sap61, sap62, sap114, sap145, slu7, smb1, smd1, smd3, smf1, smg1 and syf2.

The protein resides in the nucleus. The protein localises to the cytoplasm. In terms of biological role, plays a role in pre-mRNA splicing as a core component of the spliceosomal U1, U2, U4 and U5 small nuclear ribonucleoproteins (snRNPs), the building blocks of the spliceosome. This is Small nuclear ribonucleoprotein G (smg1) from Schizosaccharomyces pombe (strain 972 / ATCC 24843) (Fission yeast).